A 291-amino-acid chain; its full sequence is Mitochondrial thiamine pyrophosphate carrier 1 (291 aa).

The next 6 membrane-spanning stretches (helical) occupy residues 12 to 31 (GATA…GAVA), 83 to 99 (IMYI…YSMF), 120 to 141 (SLIV…FDLL), 167 to 191 (GGLA…GLMF), 214 to 230 (FCGF…TFPL), and 265 to 282 (GFGI…VSLF). Solcar repeat units lie at residues 15-102 (ASVY…FSKA), 115-200 (RPSN…AREV), and 207-290 (NIPF…VLNG).

The protein belongs to the mitochondrial carrier (TC 2.A.29) family.

The protein resides in the mitochondrion inner membrane. Mitochondrial transporter that mediates uptake of thiamine pyrophosphate (ThPP) into mitochondria. This Meyerozyma guilliermondii (strain ATCC 6260 / CBS 566 / DSM 6381 / JCM 1539 / NBRC 10279 / NRRL Y-324) (Yeast) protein is Mitochondrial thiamine pyrophosphate carrier 1 (TPC1).